The primary structure comprises 267 residues: tRNA pseudouridine synthase A (267 aa).

D52 serves as the catalytic Nucleophile. Position 110 (Y110) interacts with substrate.

It belongs to the tRNA pseudouridine synthase TruA family. As to quaternary structure, homodimer.

The enzyme catalyses uridine(38/39/40) in tRNA = pseudouridine(38/39/40) in tRNA. Its function is as follows. Formation of pseudouridine at positions 38, 39 and 40 in the anticodon stem and loop of transfer RNAs. This Paraburkholderia phymatum (strain DSM 17167 / CIP 108236 / LMG 21445 / STM815) (Burkholderia phymatum) protein is tRNA pseudouridine synthase A.